A 223-amino-acid chain; its full sequence is Ribonuclease 3 (223 aa).

The RNase III domain maps to 5-127; sequence LQRLEKKIGY…IIGAIYLDSD (123 aa). Residue glutamate 40 coordinates Mg(2+). Aspartate 44 is a catalytic residue. Aspartate 113 and glutamate 116 together coordinate Mg(2+). Glutamate 116 is a catalytic residue. The 70-residue stretch at 154–223 folds into the DRBM domain; sequence DPKTRLQEYL…AADIALGQLN (70 aa).

The protein belongs to the ribonuclease III family. In terms of assembly, homodimer. Mg(2+) serves as cofactor.

The protein resides in the cytoplasm. The catalysed reaction is Endonucleolytic cleavage to 5'-phosphomonoester.. Its function is as follows. Digests double-stranded RNA. Involved in the processing of primary rRNA transcript to yield the immediate precursors to the large and small rRNAs (23S and 16S). Processes some mRNAs, and tRNAs when they are encoded in the rRNA operon. Processes pre-crRNA and tracrRNA of type II CRISPR loci if present in the organism. The polypeptide is Ribonuclease 3 (Aliivibrio fischeri (strain ATCC 700601 / ES114) (Vibrio fischeri)).